The chain runs to 485 residues: Sulfate adenylyltransferase subunit 1 (485 aa).

In terms of domain architecture, tr-type G spans 17–232 (KDLLRLLTAG…LETVHIDNDH (216 aa)). A G1 region spans residues 26–33 (GSVDDGKS). A GTP-binding site is contributed by 26–33 (GSVDDGKS). The G2 stretch occupies residues 84 to 88 (GITID). The G3 stretch occupies residues 105–108 (DTPG). Residues 105–109 (DTPGH) and 160–163 (NKMD) contribute to the GTP site. The tract at residues 160-163 (NKMD) is G4. A G5 region spans residues 197–199 (SAL).

This sequence belongs to the TRAFAC class translation factor GTPase superfamily. Classic translation factor GTPase family. CysN/NodQ subfamily. As to quaternary structure, heterodimer composed of CysD, the smaller subunit, and CysN.

The enzyme catalyses sulfate + ATP + H(+) = adenosine 5'-phosphosulfate + diphosphate. The protein operates within sulfur metabolism; hydrogen sulfide biosynthesis; sulfite from sulfate: step 1/3. With CysD forms the ATP sulfurylase (ATPS) that catalyzes the adenylation of sulfate producing adenosine 5'-phosphosulfate (APS) and diphosphate, the first enzymatic step in sulfur assimilation pathway. APS synthesis involves the formation of a high-energy phosphoric-sulfuric acid anhydride bond driven by GTP hydrolysis by CysN coupled to ATP hydrolysis by CysD. This Bacteroides thetaiotaomicron (strain ATCC 29148 / DSM 2079 / JCM 5827 / CCUG 10774 / NCTC 10582 / VPI-5482 / E50) protein is Sulfate adenylyltransferase subunit 1.